The sequence spans 141 residues: Large ribosomal subunit protein uL16 (141 aa).

Belongs to the universal ribosomal protein uL16 family. In terms of assembly, part of the 50S ribosomal subunit.

In terms of biological role, binds 23S rRNA and is also seen to make contacts with the A and possibly P site tRNAs. The chain is Large ribosomal subunit protein uL16 from Nostoc punctiforme (strain ATCC 29133 / PCC 73102).